We begin with the raw amino-acid sequence, 617 residues long: MPPYRSRTTTHGRNMAGARGLWRATGMKDEDFGKPIIAVANSFTQFVPGHVHLKDLGQLVAREIEAAGGVAKEFNTIAVDDGIAMGHGGMLYSLPSRDLIADSVEYMVNAHCADAIVCISNCDKITPGMLMAAMRLNIPVVFVSGGPMEAGKVTVKGKIRALDLVDAMVVAADDSYSDEEVEAIEKAACPTCGSCSGMFTANSMNCLTEALGLSLPGNGSVLATHADREALFKEAGRVVVDLCQRWYEQEDATALPRGIATRAAFENAMSLDIAMGGSTNTVLHLLAAAHEGGIDFSMADIDRLSRHVPCLSKVAPAKSDVHMEDVHRAGGVMAILGELERGGLIDASQPTVHAPTMGEALARWDIGRTNSQIAHEFFKAAPGGKPTQVAFSQAARWEELDLDRENGVIRSVEHPFSKDGGLAVLFGNLAPEGCIVKTAGVDESILTFRGTARVFESQDAAVSGILGGQVKAGEVVVIRYEGPKGGPGMQEMLYPTTYLKSKGLGAACALVTDGRFSGGTSGLSIGHVSPEAGEGGLIALVETGDPILIDIPTRGITLEVSDAVLAARREAQLARGKDAWTPLNRKRDLTPALRAYAAMTTNAARGAVRDVSQIERG.

Residue D81 coordinates Mg(2+). Position 122 (C122) interacts with [2Fe-2S] cluster. D123 and K124 together coordinate Mg(2+). K124 is modified (N6-carboxylysine). C195 contacts [2Fe-2S] cluster. E491 is a binding site for Mg(2+). The active-site Proton acceptor is S517.

The protein belongs to the IlvD/Edd family. As to quaternary structure, homodimer. [2Fe-2S] cluster is required as a cofactor. Mg(2+) serves as cofactor.

It catalyses the reaction (2R)-2,3-dihydroxy-3-methylbutanoate = 3-methyl-2-oxobutanoate + H2O. The enzyme catalyses (2R,3R)-2,3-dihydroxy-3-methylpentanoate = (S)-3-methyl-2-oxopentanoate + H2O. Its pathway is amino-acid biosynthesis; L-isoleucine biosynthesis; L-isoleucine from 2-oxobutanoate: step 3/4. It functions in the pathway amino-acid biosynthesis; L-valine biosynthesis; L-valine from pyruvate: step 3/4. Its function is as follows. Functions in the biosynthesis of branched-chain amino acids. Catalyzes the dehydration of (2R,3R)-2,3-dihydroxy-3-methylpentanoate (2,3-dihydroxy-3-methylvalerate) into 2-oxo-3-methylpentanoate (2-oxo-3-methylvalerate) and of (2R)-2,3-dihydroxy-3-methylbutanoate (2,3-dihydroxyisovalerate) into 2-oxo-3-methylbutanoate (2-oxoisovalerate), the penultimate precursor to L-isoleucine and L-valine, respectively. The chain is Dihydroxy-acid dehydratase from Caulobacter vibrioides (strain ATCC 19089 / CIP 103742 / CB 15) (Caulobacter crescentus).